The primary structure comprises 392 residues: Tryptophan synthase beta chain (392 aa).

The residue at position 84 (lysine 84) is an N6-(pyridoxal phosphate)lysine.

This sequence belongs to the TrpB family. As to quaternary structure, tetramer of two alpha and two beta chains. The cofactor is pyridoxal 5'-phosphate.

The catalysed reaction is (1S,2R)-1-C-(indol-3-yl)glycerol 3-phosphate + L-serine = D-glyceraldehyde 3-phosphate + L-tryptophan + H2O. It participates in amino-acid biosynthesis; L-tryptophan biosynthesis; L-tryptophan from chorismate: step 5/5. Its function is as follows. The beta subunit is responsible for the synthesis of L-tryptophan from indole and L-serine. This chain is Tryptophan synthase beta chain, found in Campylobacter jejuni subsp. jejuni serotype O:6 (strain 81116 / NCTC 11828).